The following is a 326-amino-acid chain: tRNA-dihydrouridine(16) synthase (326 aa).

Residues 8–10 and glutamine 69 each bind FMN; that span reads PME. Catalysis depends on cysteine 99, which acts as the Proton donor. FMN contacts are provided by residues lysine 140, 200–202, and 224–225; these read NGE and GR.

This sequence belongs to the Dus family. DusC subfamily. FMN serves as cofactor.

The enzyme catalyses 5,6-dihydrouridine(16) in tRNA + NADP(+) = uridine(16) in tRNA + NADPH + H(+). It carries out the reaction 5,6-dihydrouridine(16) in tRNA + NAD(+) = uridine(16) in tRNA + NADH + H(+). Functionally, catalyzes the synthesis of 5,6-dihydrouridine (D), a modified base found in the D-loop of most tRNAs, via the reduction of the C5-C6 double bond in target uridines. Specifically modifies U16 in tRNAs. In Ralstonia nicotianae (strain ATCC BAA-1114 / GMI1000) (Ralstonia solanacearum), this protein is tRNA-dihydrouridine(16) synthase.